Reading from the N-terminus, the 496-residue chain is Maturase K (496 aa).

Belongs to the intron maturase 2 family. MatK subfamily.

Its subcellular location is the plastid. It is found in the chloroplast. In terms of biological role, usually encoded in the trnK tRNA gene intron. Probably assists in splicing its own and other chloroplast group II introns. This chain is Maturase K, found in Paeonia cambessedesii (Majorcan peony).